Here is a 353-residue protein sequence, read N- to C-terminus: Photosystem II D2 protein (353 aa).

Threonine 2 carries the N-acetylthreonine modification. Residue threonine 2 is modified to Phosphothreonine. A helical transmembrane segment spans residues 41–61; the sequence is CAYFALGGWFTGTTFVTSWYT. Histidine 118 lines the chlorophyll a pocket. A helical membrane pass occupies residues 125–141; sequence GFMLRQFELARSVQLRP. Pheophytin a is bound by residues glutamine 130 and asparagine 143. Residues 153 to 166 traverse the membrane as a helical segment; sequence VFVSVFLIYPLGQS. Residue histidine 198 participates in chlorophyll a binding. A helical membrane pass occupies residues 208-228; it reads AALLCAIHGATVENTLFEDGD. Histidine 215 and phenylalanine 262 together coordinate a plastoquinone. Position 215 (histidine 215) interacts with Fe cation. Histidine 269 lines the Fe cation pocket. Residues 279–295 traverse the membrane as a helical segment; it reads GLWMSALGVVGLALNLR.

Belongs to the reaction center PufL/M/PsbA/D family. As to quaternary structure, PSII is composed of 1 copy each of membrane proteins PsbA, PsbB, PsbC, PsbD, PsbE, PsbF, PsbH, PsbI, PsbJ, PsbK, PsbL, PsbM, PsbT, PsbX, PsbY, PsbZ, Psb30/Ycf12, at least 3 peripheral proteins of the oxygen-evolving complex and a large number of cofactors. It forms dimeric complexes. The D1/D2 heterodimer binds P680, chlorophylls that are the primary electron donor of PSII, and subsequent electron acceptors. It shares a non-heme iron and each subunit binds pheophytin, quinone, additional chlorophylls, carotenoids and lipids. There is also a Cl(-1) ion associated with D1 and D2, which is required for oxygen evolution. The PSII complex binds additional chlorophylls, carotenoids and specific lipids. is required as a cofactor.

The protein resides in the plastid. Its subcellular location is the chloroplast thylakoid membrane. It catalyses the reaction 2 a plastoquinone + 4 hnu + 2 H2O = 2 a plastoquinol + O2. Its function is as follows. Photosystem II (PSII) is a light-driven water:plastoquinone oxidoreductase that uses light energy to abstract electrons from H(2)O, generating O(2) and a proton gradient subsequently used for ATP formation. It consists of a core antenna complex that captures photons, and an electron transfer chain that converts photonic excitation into a charge separation. The D1/D2 (PsbA/PsbD) reaction center heterodimer binds P680, the primary electron donor of PSII as well as several subsequent electron acceptors. D2 is needed for assembly of a stable PSII complex. The protein is Photosystem II D2 protein of Olimarabidopsis pumila (Dwarf rocket).